Reading from the N-terminus, the 89-residue chain is Protein YihD (89 aa).

This sequence to H.influenzae HI_0845.

In Escherichia coli O157:H7, this protein is Protein YihD (yihD).